The primary structure comprises 211 residues: 5-formyltetrahydrofolate cyclo-ligase (211 aa).

Residue 4–8 (KQLLR) coordinates ATP. Residues Glu56 and 152 to 156 (HGAGY) contribute to the substrate site. ATP contacts are provided by residues 151 to 158 (GHGAGYYD) and Asp194.

The protein belongs to the 5-formyltetrahydrofolate cyclo-ligase family. N-glycosylated.

Its subcellular location is the mitochondrion. The catalysed reaction is (6S)-5-formyl-5,6,7,8-tetrahydrofolate + ATP = (6R)-5,10-methenyltetrahydrofolate + ADP + phosphate. Its function is as follows. Only enzyme known to utilize 5-formyltetrahydrofolate (folinic acid) as substrate. Contributes to tetrahydrofolate metabolism in an alternative way of folate biosynthesis. May regulate carbon flow through the folate-dependent one-carbon metabolic network that supplies carbon for the biosynthesis of purines, thymidine and amino acids. This is 5-formyltetrahydrofolate cyclo-ligase (FAU1) from Saccharomyces cerevisiae (strain ATCC 204508 / S288c) (Baker's yeast).